The chain runs to 442 residues: tRNA-2-methylthio-N(6)-dimethylallyladenosine synthase (442 aa).

One can recognise an MTTase N-terminal domain in the interval 5–122 (KKVFIKTLGC…LPEMIKRKQS (118 aa)). Residues Cys-14, Cys-51, Cys-85, Cys-159, Cys-163, and Cys-166 each contribute to the [4Fe-4S] cluster site. Positions 145-378 (KAEGAKAYVS…DLLNSNAQII (234 aa)) constitute a Radical SAM core domain. The TRAM domain occupies 380 to 442 (RQMVGTEQRI…LPNSLRGELI (63 aa)).

This sequence belongs to the methylthiotransferase family. MiaB subfamily. In terms of assembly, monomer. [4Fe-4S] cluster is required as a cofactor.

Its subcellular location is the cytoplasm. The catalysed reaction is N(6)-dimethylallyladenosine(37) in tRNA + (sulfur carrier)-SH + AH2 + 2 S-adenosyl-L-methionine = 2-methylsulfanyl-N(6)-dimethylallyladenosine(37) in tRNA + (sulfur carrier)-H + 5'-deoxyadenosine + L-methionine + A + S-adenosyl-L-homocysteine + 2 H(+). Its function is as follows. Catalyzes the methylthiolation of N6-(dimethylallyl)adenosine (i(6)A), leading to the formation of 2-methylthio-N6-(dimethylallyl)adenosine (ms(2)i(6)A) at position 37 in tRNAs that read codons beginning with uridine. This Francisella philomiragia subsp. philomiragia (strain ATCC 25017 / CCUG 19701 / FSC 153 / O#319-036) protein is tRNA-2-methylthio-N(6)-dimethylallyladenosine synthase.